The following is a 172-amino-acid chain: Nucleoside-triphosphatase THEP1 (172 aa).

Residues Gly11–Thr18 and Ile101–Gly108 contribute to the ATP site.

Belongs to the THEP1 NTPase family.

The catalysed reaction is a ribonucleoside 5'-triphosphate + H2O = a ribonucleoside 5'-diphosphate + phosphate + H(+). Its function is as follows. Has nucleotide phosphatase activity towards ATP, GTP, CTP, TTP and UTP. May hydrolyze nucleoside diphosphates with lower efficiency. The polypeptide is Nucleoside-triphosphatase THEP1 (Sulfolobus acidocaldarius (strain ATCC 33909 / DSM 639 / JCM 8929 / NBRC 15157 / NCIMB 11770)).